Reading from the N-terminus, the 1053-residue chain is Translation initiation factor IF-2 (1053 aa).

Polar residues predominate over residues 1–20; that stretch reads MSESKNSGENTLSVTPTKTL. The segment at 1 to 442 is disordered; the sequence is MSESKNSGEN…TATGGEEEER (442 aa). 2 stretches are compositionally biased toward low complexity: residues 64–76 and 83–102; these read EAAP…ATVT and RPAA…AAVP. Composition is skewed to pro residues over residues 131 to 141 and 150 to 161; these read PAQPKAEPVPA and APVPPVPAPSAP. Positions 178-220 are enriched in low complexity; the sequence is PVSQAKPIQTAPVQTAPAAQASASQTTGPRPVAAGPRPATGAA. Positions 255–264 are enriched in gly residues; that stretch reads GGRGGPGRGE. 2 stretches are compositionally biased toward basic and acidic residues: residues 279–288 and 295–353; these read LTDEEREARA and RIRE…EAKR. Residues 375–386 show a composition bias toward low complexity; it reads TATAAAPAAAAP. A tr-type G domain is found at 550-720; that stretch reads PRPPVVTIMG…ALQAELLDLK (171 aa). Positions 559-566 are G1; the sequence is GHVDHGKT. 559–566 contacts GTP; sequence GHVDHGKT. The tract at residues 584–588 is G2; sequence GITQH. The segment at 606–609 is G3; sequence DTPG. GTP-binding positions include 606 to 610 and 660 to 663; these read DTPGH and NKID. The segment at 660–663 is G4; the sequence is NKID. Residues 696 to 698 form a G5 region; it reads SAT.

The protein belongs to the TRAFAC class translation factor GTPase superfamily. Classic translation factor GTPase family. IF-2 subfamily.

It is found in the cytoplasm. Functionally, one of the essential components for the initiation of protein synthesis. Protects formylmethionyl-tRNA from spontaneous hydrolysis and promotes its binding to the 30S ribosomal subunits. Also involved in the hydrolysis of GTP during the formation of the 70S ribosomal complex. The chain is Translation initiation factor IF-2 from Beijerinckia indica subsp. indica (strain ATCC 9039 / DSM 1715 / NCIMB 8712).